The chain runs to 290 residues: Acetyl-coenzyme A carboxylase carboxyl transferase subunit beta (290 aa).

The CoA carboxyltransferase N-terminal domain maps to 28–290 (IMTKCPKCKK…TGGDIEWLQD (263 aa)). Zn(2+) contacts are provided by C32, C35, C51, and C54. Residues 32-54 (CPKCKKIMLTKELDKNMRVCMNC) form a C4-type zinc finger.

Belongs to the AccD/PCCB family. Acetyl-CoA carboxylase is a heterohexamer composed of biotin carboxyl carrier protein (AccB), biotin carboxylase (AccC) and two subunits each of ACCase subunit alpha (AccA) and ACCase subunit beta (AccD). Requires Zn(2+) as cofactor.

It is found in the cytoplasm. The catalysed reaction is N(6)-carboxybiotinyl-L-lysyl-[protein] + acetyl-CoA = N(6)-biotinyl-L-lysyl-[protein] + malonyl-CoA. Its pathway is lipid metabolism; malonyl-CoA biosynthesis; malonyl-CoA from acetyl-CoA: step 1/1. Inhibited by pyrrolidine dione antibiotics moiramide B (CPD1) and CPD2. In terms of biological role, component of the acetyl coenzyme A carboxylase (ACC) complex. Biotin carboxylase (BC) catalyzes the carboxylation of biotin on its carrier protein (BCCP) and then the CO(2) group is transferred by the transcarboxylase to acetyl-CoA to form malonyl-CoA. The protein is Acetyl-coenzyme A carboxylase carboxyl transferase subunit beta of Bacillus subtilis (strain 168).